A 334-amino-acid polypeptide reads, in one-letter code: HTH-type transcriptional repressor PurR (334 aa).

The 55-residue stretch at 2 to 56 (ATIKDVARMAGVSTTTVSHVINKTRFVAEATQKKVLAAVDDLNYAPSAVARSLKC) folds into the HTH lacI-type domain. The H-T-H motif DNA-binding region spans 4–23 (IKDVARMAGVSTTTVSHVIN). A DNA-binding region spans residues 48 to 56 (SAVARSLKC). Hypoxanthine-binding residues include Phe73, Lys189, Thr191, Phe220, and Asp274.

In terms of assembly, homodimer.

Its pathway is purine metabolism; purine nucleotide biosynthesis [regulation]. Its function is as follows. Is the main repressor of the genes involved in the de novo synthesis of purine nucleotides, regulating purB, purC, purEK, purF, purHD, purL, purMN and guaBA expression. PurR is allosterically activated to bind its cognate DNA by binding the purine corepressors, hypoxanthine or guanine, thereby effecting transcription repression. The sequence is that of HTH-type transcriptional repressor PurR from Photobacterium profundum (strain SS9).